The sequence spans 361 residues: S-adenosylmethionine decarboxylase proenzyme (361 aa).

Residues glutamate 13 and glutamate 16 contribute to the active site. Catalysis depends on serine 73, which acts as the Schiff-base intermediate with substrate; via pyruvic acid. The residue at position 73 (serine 73) is a Pyruvic acid (Ser); by autocatalysis. Cysteine 87 (proton donor; for catalytic activity) is an active-site residue. Active-site proton acceptor; for processing activity residues include serine 236 and histidine 249.

It belongs to the eukaryotic AdoMetDC family. Requires pyruvate as cofactor. Post-translationally, is synthesized initially as an inactive proenzyme. Formation of the active enzyme involves a self-maturation process in which the active site pyruvoyl group is generated from an internal serine residue via an autocatalytic post-translational modification. Two non-identical subunits are generated from the proenzyme in this reaction, and the pyruvate is formed at the N-terminus of the alpha chain, which is derived from the carboxyl end of the proenzyme. The post-translation cleavage follows an unusual pathway, termed non-hydrolytic serinolysis, in which the side chain hydroxyl group of the serine supplies its oxygen atom to form the C-terminus of the beta chain, while the remainder of the serine residue undergoes an oxidative deamination to produce ammonia and the pyruvoyl group blocking the N-terminus of the alpha chain.

The catalysed reaction is S-adenosyl-L-methionine + H(+) = S-adenosyl 3-(methylsulfanyl)propylamine + CO2. Its pathway is amine and polyamine biosynthesis; S-adenosylmethioninamine biosynthesis; S-adenosylmethioninamine from S-adenosyl-L-methionine: step 1/1. The protein is S-adenosylmethionine decarboxylase proenzyme (SAMDC) of Nicotiana tabacum (Common tobacco).